A 1220-amino-acid chain; its full sequence is Diacylglycerol kinase delta (1220 aa).

A disordered region spans residues 1–47 (MAAAAGAPPPGPPQPPPPPPPEESSDSEPEAEPGSPQKLIRKVSTSG). A regulates association with membranes region spans residues 1 to 52 (MAAAAGAPPPGPPQPPPPPPPEESSDSEPEAEPGSPQKLIRKVSTSGQIRQK). Residues 7–22 (APPPGPPQPPPPPPPE) are compositionally biased toward pro residues. The PH domain maps to 53–146 (TILKEGMLTK…WIAALKTVQN (94 aa)). Phorbol-ester/DAG-type zinc fingers lie at residues 163 to 213 (MHNW…TSNC) and 235 to 286 (PHQW…VMKC). One can recognise a DAGKc domain in the interval 317-451 (SCTSPLLVFV…MLDRWSVMAY (135 aa)). The disordered stretch occupies residues 554–584 (DDESQASSSLSNPPPTIAEEAEDGDGSGNIC). One can recognise an SAM domain in the interval 1151-1214 (WGTEEVAAWL…LCGIKELSRS (64 aa)).

Belongs to the eukaryotic diacylglycerol kinase family. Homooligomer. Monomer. Interacts with AP2A2; regulates clathrin-dependent endocytosis. Widely expressed.

The protein resides in the cell membrane. Its subcellular location is the membrane. The protein localises to the clathrin-coated pit. It localises to the cytoplasm. It carries out the reaction a 1,2-diacyl-sn-glycerol + ATP = a 1,2-diacyl-sn-glycero-3-phosphate + ADP + H(+). The enzyme catalyses 1,2-di-(9Z-octadecenoyl)-sn-glycerol + ATP = 1,2-di-(9Z-octadecenoyl)-sn-glycero-3-phosphate + ADP + H(+). The catalysed reaction is 1-octadecanoyl-2-(5Z,8Z,11Z,14Z-eicosatetraenoyl)-sn-glycerol + ATP = 1-octadecanoyl-2-(5Z,8Z,11Z,14Z-eicosatetraenoyl)-sn-glycero-3-phosphate + ADP + H(+). Its pathway is lipid metabolism; glycerolipid metabolism. Its function is as follows. Diacylglycerol kinase that converts diacylglycerol/DAG into phosphatidic acid/phosphatidate/PA and regulates the respective levels of these two bioactive lipids. Thereby, acts as a central switch between the signaling pathways activated by these second messengers with different cellular targets and opposite effects in numerous biological processes. By controlling the levels of diacylglycerol, regulates for instance the PKC and EGF receptor signaling pathways and plays a crucial role during development. May also regulate clathrin-dependent endocytosis. The polypeptide is Diacylglycerol kinase delta (Mus musculus (Mouse)).